The following is a 3122-amino-acid chain: Laminin subunit alpha-2 (3122 aa).

The N-terminal stretch at 1-22 (MPGAAGVLLLLLLSGGLGGVQA) is a signal peptide. The 252-residue stretch at 35–286 (QQRGLFPAVL…SVKDISVGGM (252 aa)) folds into the Laminin N-terminal domain. 2 N-linked (GlcNAc...) asparagine glycosylation sites follow: asparagine 55 and asparagine 89. 6 disulfide bridges follow: cysteine 287–cysteine 296, cysteine 289–cysteine 307, cysteine 309–cysteine 318, cysteine 321–cysteine 341, cysteine 344–cysteine 353, and cysteine 346–cysteine 378. Laminin EGF-like domains lie at 287–343 (CICY…ECEA), 344–413 (CNCH…PCQP), 414–468 (CHCD…DCKA), and 469–517 (CNCS…GCDE). Asparagine 303 carries N-linked (GlcNAc...) asparagine glycosylation. 2 N-linked (GlcNAc...) asparagine glycosylation sites follow: asparagine 363 and asparagine 380. 10 disulfides stabilise this stretch: cysteine 381–cysteine 390, cysteine 393–cysteine 411, cysteine 414–cysteine 426, cysteine 416–cysteine 442, cysteine 444–cysteine 453, cysteine 456–cysteine 466, cysteine 469–cysteine 482, cysteine 471–cysteine 486, cysteine 488–cysteine 497, and cysteine 500–cysteine 515. Asparagine 470 is a glycosylation site (N-linked (GlcNAc...) asparagine). A Laminin EGF-like 5; first part domain is found at 518 to 527 (CFCSGVSNRC). In terms of domain architecture, Laminin IV type A 1 spans 531-723 (YWTYGKIQDM…DGSIAAAVEV (193 aa)). Residues 724-756 (CQCPPGYTGSSCESCWPRHRRVNGTIFGGICEP) form the Laminin EGF-like 5; second part domain. The N-linked (GlcNAc...) asparagine glycan is linked to asparagine 746. 32 disulfide bridges follow: cysteine 757–cysteine 766, cysteine 759–cysteine 773, cysteine 776–cysteine 785, cysteine 788–cysteine 804, cysteine 807–cysteine 822, cysteine 809–cysteine 832, cysteine 835–cysteine 844, cysteine 847–cysteine 862, cysteine 865–cysteine 879, cysteine 867–cysteine 886, cysteine 889–cysteine 898, cysteine 901–cysteine 915, cysteine 918–cysteine 930, cysteine 920–cysteine 937, cysteine 939–cysteine 948, cysteine 951–cysteine 964, cysteine 967–cysteine 979, cysteine 969–cysteine 985, cysteine 987–cysteine 996, cysteine 999–cysteine 1011, cysteine 1014–cysteine 1023, cysteine 1016–cysteine 1030, cysteine 1032–cysteine 1041, cysteine 1044–cysteine 1057, cysteine 1060–cysteine 1072, cysteine 1062–cysteine 1079, cysteine 1081–cysteine 1090, cysteine 1093–cysteine 1103, cysteine 1106–cysteine 1118, cysteine 1108–cysteine 1134, cysteine 1136–cysteine 1145, and cysteine 1148–cysteine 1163. 8 Laminin EGF-like domains span residues 757–806 (CQCF…DCQP), 807–864 (CACP…SCQP), 865–917 (CQCN…NCQP), 918–966 (CRCN…GCVP), 967–1013 (CNCN…GCTA), 1014–1059 (CECS…GCKA), 1060–1105 (CNCS…RCNL), and 1106–1165 (CDCF…GCSS). Asparagine 1061 carries N-linked (GlcNAc...) asparagine glycosylation. Positions 1166–1175 (CYCFGTTTQC) constitute a Laminin EGF-like 14; first part domain. The Laminin IV type A 2 domain maps to 1176–1379 (SEAKGLIRTW…MTPPADLIEK (204 aa)). Positions 1380-1419 (CDCPLGYSGLSCEACLPGFYRLRSQPGGRTPGPTLGTCVP) constitute a Laminin EGF-like 14; second part domain. 12 disulfide bridges follow: cysteine 1420–cysteine 1429, cysteine 1422–cysteine 1436, cysteine 1439–cysteine 1448, cysteine 1451–cysteine 1466, cysteine 1469–cysteine 1484, cysteine 1471–cysteine 1494, cysteine 1497–cysteine 1506, cysteine 1509–cysteine 1524, cysteine 1527–cysteine 1539, cysteine 1529–cysteine 1546, cysteine 1548–cysteine 1557, and cysteine 1560–cysteine 1571. Laminin EGF-like domains follow at residues 1420-1468 (CQCN…DCQQ), 1469-1526 (CACP…SCQE), and 1527-1573 (CECD…ECVF). Residues 1574-2144 (CGDECTGLLL…NQARKQANSI (571 aa)) are domain II and I. Residues asparagine 1597, asparagine 1614, asparagine 1700, asparagine 1810, asparagine 1901, asparagine 1916, asparagine 1920, asparagine 2017, asparagine 2028, asparagine 2045, asparagine 2126, and asparagine 2240 are each glycosylated (N-linked (GlcNAc...) asparagine). The stretch at 1630-2150 (ERLIQLAEGN…ANSIKVSVSS (521 aa)) forms a coiled coil. Laminin G-like domains follow at residues 2145–2328 (KVSV…CKGC), 2340–2521 (TIQF…TKGC), 2526–2710 (VYTV…IGRC), 2763–2934 (SKQF…VGTC), and 2939–3110 (QRGT…KALE). A disulfide bond links cysteine 2302 and cysteine 2328. N-linked (GlcNAc...) asparagine glycosylation is found at asparagine 2360, asparagine 2435, and asparagine 2478. Cysteine 2495 and cysteine 2521 are disulfide-bonded. N-linked (GlcNAc...) asparagine glycosylation is found at asparagine 2551, asparagine 2558, and asparagine 2648. Cysteines 2683 and 2710 form a disulfide. 2 N-linked (GlcNAc...) asparagine glycosylation sites follow: asparagine 2868 and asparagine 2893. Cysteines 2909 and 2934 form a disulfide. Polar residues predominate over residues 3043-3060 (GNQVEAQSPNPASTSADT). Positions 3043-3063 (GNQVEAQSPNPASTSADTNDP) are disordered.

In terms of assembly, laminin is a complex glycoprotein, consisting of three different polypeptide chains (alpha, beta, gamma), which are bound to each other by disulfide bonds into a cross-shaped molecule comprising one long and three short arms with globules at each end. Alpha-2 is a subunit of laminin-2 (laminin-211 or merosin), laminin-4 (laminin-221 or S-merosin) and laminin-12 (laminin-213). Interacts with FBLN1, FBLN2 and NID2. As to expression, placenta, striated muscle, peripheral nerve, cardiac muscle, pancreas, lung, spleen, kidney, adrenal gland, skin, testis, meninges, choroid plexus, and some other regions of the brain; not in liver, thymus and bone.

It is found in the secreted. The protein resides in the extracellular space. It localises to the extracellular matrix. Its subcellular location is the basement membrane. Functionally, binding to cells via a high affinity receptor, laminin is thought to mediate the attachment, migration and organization of cells into tissues during embryonic development by interacting with other extracellular matrix components. The sequence is that of Laminin subunit alpha-2 (LAMA2) from Homo sapiens (Human).